Consider the following 404-residue polypeptide: Cysteine desulfurase IscS (404 aa).

Pyridoxal 5'-phosphate is bound by residues 75 to 76 (AT), Asn155, Gln183, and 203 to 205 (SAH). At Lys206 the chain carries N6-(pyridoxal phosphate)lysine. Residue Thr243 coordinates pyridoxal 5'-phosphate. Cys328 serves as the catalytic Cysteine persulfide intermediate. Cys328 provides a ligand contact to [2Fe-2S] cluster.

It belongs to the class-V pyridoxal-phosphate-dependent aminotransferase family. NifS/IscS subfamily. Homodimer. Forms a heterotetramer with IscU, interacts with other sulfur acceptors. The cofactor is pyridoxal 5'-phosphate.

Its subcellular location is the cytoplasm. The catalysed reaction is (sulfur carrier)-H + L-cysteine = (sulfur carrier)-SH + L-alanine. Its pathway is cofactor biosynthesis; iron-sulfur cluster biosynthesis. In terms of biological role, master enzyme that delivers sulfur to a number of partners involved in Fe-S cluster assembly, tRNA modification or cofactor biosynthesis. Catalyzes the removal of elemental sulfur atoms from cysteine to produce alanine. Functions as a sulfur delivery protein for Fe-S cluster synthesis onto IscU, an Fe-S scaffold assembly protein, as well as other S acceptor proteins. The chain is Cysteine desulfurase IscS from Buchnera aphidicola subsp. Baizongia pistaciae (strain Bp).